The following is a 213-amino-acid chain: 3,4-dihydroxy-2-butanone 4-phosphate synthase (213 aa).

Residues 37-38 (RE), D42, 150-154 (RSGHT), and E174 contribute to the D-ribulose 5-phosphate site. E38 serves as a coordination point for Mg(2+). Residue H153 coordinates Mg(2+).

The protein belongs to the DHBP synthase family. As to quaternary structure, homodimer. The cofactor is Mg(2+). Requires Mn(2+) as cofactor.

It carries out the reaction D-ribulose 5-phosphate = (2S)-2-hydroxy-3-oxobutyl phosphate + formate + H(+). It functions in the pathway cofactor biosynthesis; riboflavin biosynthesis; 2-hydroxy-3-oxobutyl phosphate from D-ribulose 5-phosphate: step 1/1. Catalyzes the conversion of D-ribulose 5-phosphate to formate and 3,4-dihydroxy-2-butanone 4-phosphate. In Blochmanniella floridana, this protein is 3,4-dihydroxy-2-butanone 4-phosphate synthase.